We begin with the raw amino-acid sequence, 557 residues long: MTDIPESLKPFVTKKVIHSTWAGTFLCKPQAIFQPRNVEEIQELIKQARLHGKTIMTVGSGHSPSDLTMTTEWLCNLDKFNHVLLEEPYYAPKSPTDDTPEIKFVDLTVEAGTRIFELNEYLKRNNLAIQNLGSISDQSIAGLISTGTHGSTQYHGLVSQQVVSVKFLNSAGELITCSSVDKPEYFRAILLSLGKIGIITHVTLRTCPKYTIKSKQEIINFETLLNNWDNLWLESEFIRIWWFPYTNKCVLWRANKSTDPLSDPRPSWYGTKLGRFFYESLLWVSVHLFPRLTPFVEKFVFGQQYGEVETLGKGDIAVQNSVEGLNMDCLFSQFVNEWSSPLNSGPEILTELKKIITDASQTGDFFVHAPIEVRCSNVTYSDEPFTDDKNQKSLYPSQEWLSNRSKTSAGPIPGNNLRPYLDNSPKLPYSKDGKITNDQLTLFINATMYRPFGTNVETHKWFQLFEDVMSKAGGKPHWAKNFIGLTQDEKYDKQQDLKTQLEFGGKPFYTMLGFKPVMQDWFGKDLVAFNKVRKETDPDGVFLSGKVWAERNGILLD.

In terms of domain architecture, FAD-binding PCMH-type spans 25 to 209 (FLCKPQAIFQ…THVTLRTCPK (185 aa)). FAD is bound by residues 58–61 (VGSG), 62–63 (HS), 144–148 (ISTGT), Ile199, and 543–546 (LSGK). His62 is subject to Pros-8alpha-FAD histidine.

The protein belongs to the oxygen-dependent FAD-linked oxidoreductase family. Requires FAD as cofactor.

It catalyses the reaction D-arabinono-1,4-lactone + O2 = dehydro-D-arabinono-1,4-lactone + H2O2 + H(+). The enzyme catalyses L-galactono-1,4-lactone + O2 = L-ascorbate + H2O2 + H(+). It carries out the reaction L-gulono-1,4-lactone + O2 = L-ascorbate + H2O2 + H(+). The catalysed reaction is L-xylono-1,4-lactone + O2 = dehydro-L-arabinono-1,4-lactone + H2O2 + H(+). It participates in cofactor biosynthesis; D-erythroascorbate biosynthesis; dehydro-D-arabinono-1,4-lactone from D-arabinose: step 2/2. Its function is as follows. D-arabinono-1,4-lactone oxidase that catalyzes the final step of biosynthesis of D-erythroascorbic acid, an important antioxidant and one of the virulence factors enhancing the pathogenicity. Is also able to oxidize L-galactono-1,4-lactone, L-xylono-1,4-lactone and L-gulono-1,4-lactone. The polypeptide is D-arabinono-1,4-lactone oxidase (Candida albicans (strain SC5314 / ATCC MYA-2876) (Yeast)).